The chain runs to 361 residues: Probable pectinesterase 49 (361 aa).

Positions 1–22 (MGYISLALVALLVFFASPVVLA) are cleaved as a signal peptide. Residue Asn-128 is glycosylated (N-linked (GlcNAc...) asparagine). Gln-174 is a binding site for substrate. The Proton donor role is filled by Asp-197. The Nucleophile role is filled by Asp-218. Residues Arg-275 and Trp-277 each coordinate substrate.

Belongs to the pectinesterase family. As to expression, expressed in flower buds.

It is found in the secreted. The protein localises to the cell wall. It carries out the reaction [(1-&gt;4)-alpha-D-galacturonosyl methyl ester](n) + n H2O = [(1-&gt;4)-alpha-D-galacturonosyl](n) + n methanol + n H(+). It functions in the pathway glycan metabolism; pectin degradation; 2-dehydro-3-deoxy-D-gluconate from pectin: step 1/5. Its function is as follows. Acts in the modification of cell walls via demethylesterification of cell wall pectin. This Arabidopsis thaliana (Mouse-ear cress) protein is Probable pectinesterase 49 (PME49).